A 294-amino-acid chain; its full sequence is 4-hydroxy-tetrahydrodipicolinate synthase (294 aa).

T45 lines the pyruvate pocket. Y133 serves as the catalytic Proton donor/acceptor. K162 functions as the Schiff-base intermediate with substrate in the catalytic mechanism. I204 contributes to the pyruvate binding site.

This sequence belongs to the DapA family. In terms of assembly, homotetramer; dimer of dimers.

The protein localises to the cytoplasm. The enzyme catalyses L-aspartate 4-semialdehyde + pyruvate = (2S,4S)-4-hydroxy-2,3,4,5-tetrahydrodipicolinate + H2O + H(+). The protein operates within amino-acid biosynthesis; L-lysine biosynthesis via DAP pathway; (S)-tetrahydrodipicolinate from L-aspartate: step 3/4. Functionally, catalyzes the condensation of (S)-aspartate-beta-semialdehyde [(S)-ASA] and pyruvate to 4-hydroxy-tetrahydrodipicolinate (HTPA). This chain is 4-hydroxy-tetrahydrodipicolinate synthase, found in Bartonella tribocorum (strain CIP 105476 / IBS 506).